Here is a 274-residue protein sequence, read N- to C-terminus: 3-methyl-2-oxobutanoate hydroxymethyltransferase (274 aa).

The Mg(2+) site is built by Asp-49 and Asp-88. 3-methyl-2-oxobutanoate contacts are provided by residues 49–50 (DS), Asp-88, and Lys-118. Residue Glu-120 coordinates Mg(2+). Glu-187 (proton acceptor) is an active-site residue.

It belongs to the PanB family. In terms of assembly, homodecamer; pentamer of dimers. The cofactor is Mg(2+).

The protein resides in the cytoplasm. It catalyses the reaction 3-methyl-2-oxobutanoate + (6R)-5,10-methylene-5,6,7,8-tetrahydrofolate + H2O = 2-dehydropantoate + (6S)-5,6,7,8-tetrahydrofolate. The protein operates within cofactor biosynthesis; (R)-pantothenate biosynthesis; (R)-pantoate from 3-methyl-2-oxobutanoate: step 1/2. Its function is as follows. Catalyzes the reversible reaction in which hydroxymethyl group from 5,10-methylenetetrahydrofolate is transferred onto alpha-ketoisovalerate to form ketopantoate. In Parvibaculum lavamentivorans (strain DS-1 / DSM 13023 / NCIMB 13966), this protein is 3-methyl-2-oxobutanoate hydroxymethyltransferase.